A 380-amino-acid chain; its full sequence is Homoserine O-acetyltransferase (380 aa).

Residues 70 to 366 form the AB hydrolase-1 domain; sequence NAVLVFHALT…SPHGHDAFLI (297 aa). Residue Ser-186 is the Nucleophile of the active site. Arg-250 provides a ligand contact to substrate. Residues Asp-333 and His-361 contribute to the active site. Asp-362 is a substrate binding site.

It belongs to the AB hydrolase superfamily. MetX family. Homodimer.

It localises to the cytoplasm. The catalysed reaction is L-homoserine + acetyl-CoA = O-acetyl-L-homoserine + CoA. It participates in amino-acid biosynthesis; L-methionine biosynthesis via de novo pathway; O-acetyl-L-homoserine from L-homoserine: step 1/1. Its function is as follows. Transfers an acetyl group from acetyl-CoA to L-homoserine, forming acetyl-L-homoserine. The chain is Homoserine O-acetyltransferase from Thermus thermophilus (strain ATCC 27634 / DSM 579 / HB8).